A 374-amino-acid chain; its full sequence is Probable phosphoserine aminotransferase (374 aa).

L-glutamate is bound at residue arginine 48. Pyridoxal 5'-phosphate contacts are provided by residues 82 to 83, tryptophan 110, threonine 160, aspartate 183, and glutamine 206; that span reads AS. N6-(pyridoxal phosphate)lysine is present on lysine 207. Position 248–249 (248–249) interacts with pyridoxal 5'-phosphate; it reads NT.

It belongs to the class-V pyridoxal-phosphate-dependent aminotransferase family. SerC subfamily. In terms of assembly, homodimer. The cofactor is pyridoxal 5'-phosphate.

It carries out the reaction O-phospho-L-serine + 2-oxoglutarate = 3-phosphooxypyruvate + L-glutamate. The catalysed reaction is 4-(phosphooxy)-L-threonine + 2-oxoglutarate = (R)-3-hydroxy-2-oxo-4-phosphooxybutanoate + L-glutamate. It participates in amino-acid biosynthesis; L-serine biosynthesis; L-serine from 3-phospho-D-glycerate: step 2/3. It functions in the pathway cofactor biosynthesis; pyridoxine 5'-phosphate biosynthesis; pyridoxine 5'-phosphate from D-erythrose 4-phosphate: step 3/5. Catalyzes the reversible conversion of 3-phosphohydroxypyruvate to phosphoserine and of 3-hydroxy-2-oxo-4-phosphonooxybutanoate to phosphohydroxythreonine. The protein is Probable phosphoserine aminotransferase (serC) of Dictyostelium discoideum (Social amoeba).